A 102-amino-acid chain; its full sequence is Protein RnfH (102 aa).

The protein belongs to the UPF0125 (RnfH) family.

In Pseudomonas entomophila (strain L48), this protein is Protein RnfH.